The sequence spans 143 residues: 3-dehydroquinate dehydratase (143 aa).

Tyr21 acts as the Proton acceptor in catalysis. Substrate contacts are provided by Asn73, His79, and Asp86. Residue His99 is the Proton donor of the active site. Substrate is bound by residues 100-101 and Arg110; that span reads IS.

The protein belongs to the type-II 3-dehydroquinase family. Homododecamer.

It catalyses the reaction 3-dehydroquinate = 3-dehydroshikimate + H2O. It participates in metabolic intermediate biosynthesis; chorismate biosynthesis; chorismate from D-erythrose 4-phosphate and phosphoenolpyruvate: step 3/7. In terms of biological role, catalyzes a trans-dehydration via an enolate intermediate. This is 3-dehydroquinate dehydratase from Deinococcus radiodurans (strain ATCC 13939 / DSM 20539 / JCM 16871 / CCUG 27074 / LMG 4051 / NBRC 15346 / NCIMB 9279 / VKM B-1422 / R1).